The following is a 433-amino-acid chain: Enolase (433 aa).

Glutamine 167 contributes to the (2R)-2-phosphoglycerate binding site. The Proton donor role is filled by glutamate 209. The Mg(2+) site is built by aspartate 246, glutamate 291, and aspartate 318. At lysine 326 the chain carries N6-acetyllysine. Positions 343, 372, 373, and 394 each coordinate (2R)-2-phosphoglycerate. The active-site Proton acceptor is lysine 343. Position 343 is an N6-(2-hydroxyisobutyryl)lysine (lysine 343).

The protein belongs to the enolase family. Component of the RNA degradosome, a multiprotein complex involved in RNA processing and mRNA degradation. Mg(2+) serves as cofactor. In terms of processing, acetylated and 2-hydroxyisobutyrylated at Lys-326 and Lys-343, respectively, reducing the enolase activity. Deacetylated and de-2-hydroxyisobutyrylated by NpdA/CobB, increasing the enolase activity.

It localises to the cytoplasm. The protein localises to the secreted. The protein resides in the cell surface. The catalysed reaction is (2R)-2-phosphoglycerate = phosphoenolpyruvate + H2O. It participates in carbohydrate degradation; glycolysis; pyruvate from D-glyceraldehyde 3-phosphate: step 4/5. Catalyzes the reversible conversion of 2-phosphoglycerate (2-PG) into phosphoenolpyruvate (PEP). It is essential for the degradation of carbohydrates via glycolysis. This is Enolase from Proteus mirabilis (strain HI4320).